Consider the following 904-residue polypeptide: Protein translocase subunit SecA (904 aa).

Residues Gln89, 107-111, and Asp496 contribute to the ATP site; that span reads GEGKT. The segment at 870 to 904 is disordered; that stretch reads GGFQELSSGTPSPTVTVTTSSGGGTERKTSRRRKR. Positions 876 to 889 are enriched in low complexity; it reads SSGTPSPTVTVTTS.

It belongs to the SecA family. Monomer and homodimer. Part of the essential Sec protein translocation apparatus which comprises SecA, SecYEG and auxiliary proteins SecDF. Other proteins may also be involved.

It is found in the cell inner membrane. The protein localises to the cytoplasm. It catalyses the reaction ATP + H2O + cellular proteinSide 1 = ADP + phosphate + cellular proteinSide 2.. In terms of biological role, part of the Sec protein translocase complex. Interacts with the SecYEG preprotein conducting channel. Has a central role in coupling the hydrolysis of ATP to the transfer of proteins into and across the cell membrane, serving as an ATP-driven molecular motor driving the stepwise translocation of polypeptide chains across the membrane. In Leptospira borgpetersenii serovar Hardjo-bovis (strain L550), this protein is Protein translocase subunit SecA.